We begin with the raw amino-acid sequence, 260 residues long: Thrombin-like enzyme 1 (260 aa).

The N-terminal stretch at 1–18 (MVLITVLANLLILQLSYA) is a signal peptide. The propeptide occupies 19 to 24 (QKSSEL). The region spanning 25 to 251 (VIGGDECNIN…HLDWIQSIIA (227 aa)) is the Peptidase S1 domain. Intrachain disulfides connect cysteine 31–cysteine 165, cysteine 52–cysteine 68, cysteine 102–cysteine 258, cysteine 144–cysteine 212, cysteine 176–cysteine 191, and cysteine 202–cysteine 227. Residue histidine 67 is the Charge relay system of the active site. Asparagine 105 carries an N-linked (GlcNAc...) asparagine glycan. Aspartate 112 acts as the Charge relay system in catalysis. 2 N-linked (GlcNAc...) asparagine glycosylation sites follow: asparagine 156 and asparagine 172. Residue serine 206 is the Charge relay system of the active site. Asparagine 253 carries an N-linked (GlcNAc...) asparagine glycan.

Belongs to the peptidase S1 family. Snake venom subfamily. Monomer. In terms of tissue distribution, expressed by the venom gland.

It localises to the secreted. In terms of biological role, thrombin-like snake venom serine protease. In Trimeresurus albolabris (White-lipped pit viper), this protein is Thrombin-like enzyme 1.